The following is a 23-amino-acid chain: Coenzyme PQQ synthesis protein A (23 aa).

The pyrroloquinoline quinone (Glu-Tyr) cross-link spans 15 to 19 (EVTMY).

Belongs to the PqqA family.

It participates in cofactor biosynthesis; pyrroloquinoline quinone biosynthesis. Functionally, required for coenzyme pyrroloquinoline quinone (PQQ) biosynthesis. PQQ is probably formed by cross-linking a specific glutamate to a specific tyrosine residue and excising these residues from the peptide. The polypeptide is Coenzyme PQQ synthesis protein A (Ectopseudomonas mendocina (strain ymp) (Pseudomonas mendocina)).